The sequence spans 414 residues: 5-aminolevulinate synthase (414 aa).

Positions 22, 133, and 152 each coordinate substrate. Ser185, His213, and Thr241 together coordinate pyridoxal 5'-phosphate. Residue Lys244 is part of the active site. Position 244 is an N6-(pyridoxal phosphate)lysine (Lys244). Pyridoxal 5'-phosphate is bound by residues Thr273 and Thr274. Thr359 is a binding site for substrate.

Belongs to the class-II pyridoxal-phosphate-dependent aminotransferase family. Homodimer. Pyridoxal 5'-phosphate is required as a cofactor.

It catalyses the reaction succinyl-CoA + glycine + H(+) = 5-aminolevulinate + CO2 + CoA. Its pathway is porphyrin-containing compound metabolism; protoporphyrin-IX biosynthesis; 5-aminolevulinate from glycine: step 1/1. This chain is 5-aminolevulinate synthase (hemA), found in Rickettsia typhi (strain ATCC VR-144 / Wilmington).